A 252-amino-acid polypeptide reads, in one-letter code: Trans-aconitate 2-methyltransferase (252 aa).

Belongs to the methyltransferase superfamily. Tam family.

It is found in the cytoplasm. The enzyme catalyses trans-aconitate + S-adenosyl-L-methionine = (E)-3-(methoxycarbonyl)pent-2-enedioate + S-adenosyl-L-homocysteine. Catalyzes the S-adenosylmethionine monomethyl esterification of trans-aconitate. The polypeptide is Trans-aconitate 2-methyltransferase (Escherichia coli O6:H1 (strain CFT073 / ATCC 700928 / UPEC)).